A 127-amino-acid polypeptide reads, in one-letter code: Large-conductance mechanosensitive channel (127 aa).

Transmembrane regions (helical) follow at residues 14-34 and 69-89; these read VLDL…VKSL and GAFL…FLIV.

Belongs to the MscL family. In terms of assembly, homopentamer.

The protein resides in the cell membrane. Functionally, channel that opens in response to stretch forces in the membrane lipid bilayer. May participate in the regulation of osmotic pressure changes within the cell. The polypeptide is Large-conductance mechanosensitive channel (Leuconostoc mesenteroides subsp. mesenteroides (strain ATCC 8293 / DSM 20343 / BCRC 11652 / CCM 1803 / JCM 6124 / NCDO 523 / NBRC 100496 / NCIMB 8023 / NCTC 12954 / NRRL B-1118 / 37Y)).